The chain runs to 60 residues: Large ribosomal subunit protein uL30 (60 aa).

It belongs to the universal ribosomal protein uL30 family. Part of the 50S ribosomal subunit.

This is Large ribosomal subunit protein uL30 from Kineococcus radiotolerans (strain ATCC BAA-149 / DSM 14245 / SRS30216).